The following is a 138-amino-acid chain: Small ribosomal subunit protein uS11c (138 aa).

The segment at 1 to 22 is disordered; the sequence is MAKLLPRIGSRKNGRISSRKNA. Positions 9-22 are enriched in basic residues; the sequence is GSRKNGRISSRKNA.

The protein belongs to the universal ribosomal protein uS11 family. In terms of assembly, part of the 30S ribosomal subunit.

The protein localises to the plastid. The protein resides in the chloroplast. The chain is Small ribosomal subunit protein uS11c from Populus alba (White poplar).